Consider the following 193-residue polypeptide: Probable GTP-binding protein EngB (193 aa).

Residues glycine 22–alanine 193 enclose the EngB-type G domain. GTP contacts are provided by residues glycine 30 to serine 37, glycine 57 to glycine 61, aspartate 75 to glycine 78, threonine 142 to aspartate 145, and phenylalanine 173 to serine 175. Mg(2+) contacts are provided by serine 37 and threonine 59.

Belongs to the TRAFAC class TrmE-Era-EngA-EngB-Septin-like GTPase superfamily. EngB GTPase family. Requires Mg(2+) as cofactor.

In terms of biological role, necessary for normal cell division and for the maintenance of normal septation. The sequence is that of Probable GTP-binding protein EngB from Desulfotalea psychrophila (strain LSv54 / DSM 12343).